Consider the following 394-residue polypeptide: Elongation factor Tu (394 aa).

A tr-type G domain is found at 10–205 (KPHMNVGTIG…SMDNYFDLPE (196 aa)). The interval 19–26 (GHVDHGKT) is G1. 19–26 (GHVDHGKT) contacts GTP. T26 lines the Mg(2+) pocket. A G2 region spans residues 61-65 (GITIN). The tract at residues 82 to 85 (DCPG) is G3. GTP is bound by residues 82–86 (DCPGH) and 137–140 (NKLD). A G4 region spans residues 137–140 (NKLD). Positions 173–175 (SAF) are G5.

It belongs to the TRAFAC class translation factor GTPase superfamily. Classic translation factor GTPase family. EF-Tu/EF-1A subfamily. In terms of assembly, monomer.

The protein resides in the cytoplasm. The catalysed reaction is GTP + H2O = GDP + phosphate + H(+). Its function is as follows. GTP hydrolase that promotes the GTP-dependent binding of aminoacyl-tRNA to the A-site of ribosomes during protein biosynthesis. The protein is Elongation factor Tu of Borreliella burgdorferi (strain ATCC 35210 / DSM 4680 / CIP 102532 / B31) (Borrelia burgdorferi).